Here is an 88-residue protein sequence, read N- to C-terminus: Small ribosomal subunit protein bS21 (88 aa).

The disordered stretch occupies residues 58–88 (ARKRAQREGLLPMTPRPVAAGGAAGAARPPR). The span at 73-88 (RPVAAGGAAGAARPPR) shows a compositional bias: low complexity.

This sequence belongs to the bacterial ribosomal protein bS21 family.

The chain is Small ribosomal subunit protein bS21 from Mesorhizobium japonicum (strain LMG 29417 / CECT 9101 / MAFF 303099) (Mesorhizobium loti (strain MAFF 303099)).